The following is a 247-amino-acid chain: Adiponectin (247 aa).

Positions 1-17 are cleaved as a signal peptide; sequence MLLLQALLFLLILPSHA. 2 O-linked (GalNAc...) threonine glycosylation sites follow: Thr-23 and Thr-24. At Lys-36 the chain carries 5-hydroxylysine. An S-(2-succinyl)cysteine modification is found at Cys-39. Residues 44-105 form a disordered region; sequence AGIPGHPGHN…GFPGTPGRKG (62 aa). The Collagen-like domain occupies 45-110; that stretch reads GIPGHPGHNG…PGRKGEPGEA (66 aa). A 4-hydroxyproline mark is found at Pro-47, Pro-50, and Pro-56. Residues 58 to 73 show a composition bias toward basic and acidic residues; sequence RDGRDGTPGEKGEKGD. A 5-hydroxylysine; alternate mark is found at Lys-68, Lys-71, and Lys-80. O-linked (Gal...) hydroxylysine; alternate glycans are attached at residues Lys-68, Lys-71, and Lys-80. Pro-94 is subject to 4-hydroxyproline. Residue Lys-104 is modified to 5-hydroxylysine; alternate. Lys-104 carries an O-linked (Gal...) hydroxylysine; alternate glycan. Positions 111–247 constitute a C1q domain; the sequence is AYVYRSAFSV…TGFLLYHDTN (137 aa).

As to quaternary structure, homomultimer. Forms trimers, hexamers and 12- to 18-mers. The trimers (low molecular weight complexes / LMW) are assembled via non-covalent interactions of the collagen-like domains in a triple helix and hydrophobic interactions within the globular C1q domain. Several trimers can associate to form disulfide-linked hexamers (middle molecular weight complexes / MMW) and larger complexes (higher molecular weight / HMW). The HMW-complex assembly is also modulated by the degree of lysine hydroxylation and glycosylation. LMW, MMW and HMW complexes bind to HBEGF, MMW and HMW complexes bind to PDGFB, and HMW complex binds to FGF2. Interacts with CTRP9 via the C1q domain (heterotrimeric complex). Post-translationally, HMW complexes are more extensively glycosylated than smaller oligomers. Hydroxylation and glycosylation of the lysine residues within the collagen-like domain of adiponectin seem to be critically involved in regulating the formation and/or secretion of HMW complexes and consequently contribute to the insulin-sensitizing activity of adiponectin in hepatocytes. O-glycosylated. Not N-glycosylated O-linked glycans on hydroxylysine residues consist of Glc-Gal disaccharides bound to the oxygen atom of post-translationally added hydroxyl groups. O-linked glycosylation in the N-terminal is disialylated with the structure Neu5Acalpha2-&gt;8Neu5Acalpha2-&gt;3Gal. Sialylated by alpha 2,8-sialyltransferase III. In terms of processing, succination of Cys-39 by the Krebs cycle intermediate fumarate, which leads to S-(2-succinyl)cysteine residues, inhibits polymerization and secretion of adiponectin. Adiponectin is a major target for succination in both adipocytes and adipose tissue of diabetic mice. It was proposed that succination of proteins is a biomarker of mitochondrial stress and accumulation of Krebs cycle intermediates in adipose tissue in diabetes and that succination of adiponectin may contribute to the decrease in plasma adiponectin in diabetes. In terms of tissue distribution, synthesized exclusively by adipocytes and secreted into plasma.

The protein localises to the secreted. Polymerization and secretion of adiponectin is inhibited by succination of cysteine residues by the Krebs cycle intermediate fumarate, which leads to S-(2-succinyl)cysteine residues. Its function is as follows. Important adipokine involved in the control of fat metabolism and insulin sensitivity, with direct anti-diabetic, anti-atherogenic and anti-inflammatory activities. Stimulates AMPK phosphorylation and activation in the liver and the skeletal muscle, enhancing glucose utilization and fatty-acid combustion. Antagonizes TNF-alpha by negatively regulating its expression in various tissues such as liver and macrophages, and also by counteracting its effects. Inhibits endothelial NF-kappa-B signaling through a cAMP-dependent pathway. May play a role in cell growth, angiogenesis and tissue remodeling by binding and sequestering various growth factors with distinct binding affinities, depending on the type of complex, LMW, MMW or HMW. In Mus musculus (Mouse), this protein is Adiponectin (Adipoq).